A 452-amino-acid chain; its full sequence is Pup--protein ligase (452 aa).

Glu9 serves as a coordination point for Mg(2+). Residue Arg53 participates in ATP binding. Tyr55 contributes to the Mg(2+) binding site. The active-site Proton acceptor is the Asp57. A Mg(2+)-binding site is contributed by Glu63. 2 residues coordinate ATP: Thr66 and Trp419.

It belongs to the Pup ligase/Pup deamidase family. Pup-conjugating enzyme subfamily.

It carries out the reaction ATP + [prokaryotic ubiquitin-like protein]-L-glutamate + [protein]-L-lysine = ADP + phosphate + N(6)-([prokaryotic ubiquitin-like protein]-gamma-L-glutamyl)-[protein]-L-lysine.. It participates in protein degradation; proteasomal Pup-dependent pathway. It functions in the pathway protein modification; protein pupylation. Catalyzes the covalent attachment of the prokaryotic ubiquitin-like protein modifier Pup to the proteasomal substrate proteins, thereby targeting them for proteasomal degradation. This tagging system is termed pupylation. The ligation reaction involves the side-chain carboxylate of the C-terminal glutamate of Pup and the side-chain amino group of a substrate lysine. This is Pup--protein ligase from Mycobacterium tuberculosis (strain KZN 1435 / MDR).